Here is a 338-residue protein sequence, read N- to C-terminus: Ketol-acid reductoisomerase (NADP(+)) (338 aa).

One can recognise a KARI N-terminal Rossmann domain in the interval 1 to 181; the sequence is MRVYYDKDCD…GGGRSGIIET (181 aa). Residues 24–27, R47, S50, S52, and 82–85 contribute to the NADP(+) site; these read YGSQ and DENQ. H107 is an active-site residue. G133 provides a ligand contact to NADP(+). The 146-residue stretch at 182-327 folds into the KARI C-terminal knotted domain; sequence TFKDETETDL…EKLRGMMPWI (146 aa). Residues D190, E194, E226, and E230 each contribute to the Mg(2+) site. S251 lines the substrate pocket.

Belongs to the ketol-acid reductoisomerase family. The cofactor is Mg(2+).

It carries out the reaction (2R)-2,3-dihydroxy-3-methylbutanoate + NADP(+) = (2S)-2-acetolactate + NADPH + H(+). The enzyme catalyses (2R,3R)-2,3-dihydroxy-3-methylpentanoate + NADP(+) = (S)-2-ethyl-2-hydroxy-3-oxobutanoate + NADPH + H(+). It functions in the pathway amino-acid biosynthesis; L-isoleucine biosynthesis; L-isoleucine from 2-oxobutanoate: step 2/4. It participates in amino-acid biosynthesis; L-valine biosynthesis; L-valine from pyruvate: step 2/4. Functionally, involved in the biosynthesis of branched-chain amino acids (BCAA). Catalyzes an alkyl-migration followed by a ketol-acid reduction of (S)-2-acetolactate (S2AL) to yield (R)-2,3-dihydroxy-isovalerate. In the isomerase reaction, S2AL is rearranged via a Mg-dependent methyl migration to produce 3-hydroxy-3-methyl-2-ketobutyrate (HMKB). In the reductase reaction, this 2-ketoacid undergoes a metal-dependent reduction by NADPH to yield (R)-2,3-dihydroxy-isovalerate. The chain is Ketol-acid reductoisomerase (NADP(+)) from Chromohalobacter salexigens (strain ATCC BAA-138 / DSM 3043 / CIP 106854 / NCIMB 13768 / 1H11).